We begin with the raw amino-acid sequence, 297 residues long: Large ribosomal subunit protein uL24m (297 aa).

N-acetylserine is present on S2. The region spanning 63–96 (FIPGDRVVVMSGASKGNIAVIKSFDKRTNSFILD) is the KOW domain.

This sequence belongs to the universal ribosomal protein uL24 family. In terms of assembly, component of the mitochondrial large ribosomal subunit (mt-LSU). Mature yeast 74S mitochondrial ribosomes consist of a small (37S) and a large (54S) subunit. The 37S small subunit contains a 15S ribosomal RNA (15S mt-rRNA) and 34 different proteins. The 54S large subunit contains a 21S rRNA (21S mt-rRNA) and 46 different proteins. uL24m forms the wall of the exit tunnel.

The protein localises to the mitochondrion. In terms of biological role, component of the mitochondrial ribosome (mitoribosome), a dedicated translation machinery responsible for the synthesis of mitochondrial genome-encoded proteins, including at least some of the essential transmembrane subunits of the mitochondrial respiratory chain. The mitoribosomes are attached to the mitochondrial inner membrane and translation products are cotranslationally integrated into the membrane. This Saccharomyces cerevisiae (strain ATCC 204508 / S288c) (Baker's yeast) protein is Large ribosomal subunit protein uL24m (MRPL40).